A 452-amino-acid chain; its full sequence is MEDKKANIIATILILALVVVIIAARVSLKLSKTFYLIAGVDISLILAVICFLIIRSRYNKERKLLVSRFASEGRELRIEYSFLRKVAGVPTKFKLEDLEEATDGFRSLIGKGGSGSVFKGVLKDGSQVAVKRIEGEEKGEREFRSEVAAIASVQHKNLVRLYGYSSSTSANRPRFLVYDYIVNSSLDIWIFPDRGNRGRSGGGCLSWEQRYQVAIDVAKALAYLHHDCRSKILHLDVKPENILLDENFRAVVTDFGLSKLIARDESRVLTDIRGTRGYLAPEWLLEHGISEKSDVYSYGIVLLEMIGGRRSISRVEVKETKKKKLEYFPRIVNQKMRERKIMEIVDQRLIEVNEVDEEEVMKLVCVALWCIQEKSKKRPDMTMVIEMLEGRVPVNEPPDSDVVVVDLLAADDDDASTGVRRVVNIPKLQIHRERNFRLSSICSSIISPISPR.

The signal sequence occupies residues 1–23 (MEDKKANIIATILILALVVVIIA). Residues 24–33 (ARVSLKLSKT) are Extracellular-facing. The helical transmembrane segment at 34–54 (FYLIAGVDISLILAVICFLII) threads the bilayer. The Cytoplasmic segment spans residues 55-452 (RSRYNKERKL…SSIISPISPR (398 aa)). The Protein kinase domain occupies 103–392 (DGFRSLIGKG…MVIEMLEGRV (290 aa)). Residues 109–117 (IGKGGSGSV) and lysine 131 each bind ATP. At tyrosine 178 the chain carries Phosphotyrosine. The Proton acceptor role is filled by aspartate 236. Phosphothreonine occurs at positions 270 and 275.

It belongs to the protein kinase superfamily. Ser/Thr protein kinase family.

The protein resides in the membrane. The enzyme catalyses L-seryl-[protein] + ATP = O-phospho-L-seryl-[protein] + ADP + H(+). The catalysed reaction is L-threonyl-[protein] + ATP = O-phospho-L-threonyl-[protein] + ADP + H(+). The chain is Probable receptor-like protein kinase At5g20050 from Arabidopsis thaliana (Mouse-ear cress).